The chain runs to 352 residues: Histidine biosynthesis bifunctional protein HisB (352 aa).

The interval 1 to 163 (MKKILFIDRD…MVASAIINDA (163 aa)) is histidinol-phosphatase. Asp-8 functions as the Nucleophile in the catalytic mechanism. 2 residues coordinate Mg(2+): Asp-8 and Asp-10. Asp-10 (proton donor) is an active-site residue. The Zn(2+) site is built by Cys-91, His-93, Cys-99, and Cys-101. Asp-128 is a Mg(2+) binding site. The tract at residues 164 to 352 (RKASVQRKTK…NYLPSTKGVL (189 aa)) is imidazoleglycerol-phosphate dehydratase.

It in the N-terminal section; belongs to the histidinol-phosphatase family. In the C-terminal section; belongs to the imidazoleglycerol-phosphate dehydratase family. It depends on Mg(2+) as a cofactor. Zn(2+) is required as a cofactor.

The protein localises to the cytoplasm. The catalysed reaction is D-erythro-1-(imidazol-4-yl)glycerol 3-phosphate = 3-(imidazol-4-yl)-2-oxopropyl phosphate + H2O. It catalyses the reaction L-histidinol phosphate + H2O = L-histidinol + phosphate. The protein operates within amino-acid biosynthesis; L-histidine biosynthesis; L-histidine from 5-phospho-alpha-D-ribose 1-diphosphate: step 6/9. It participates in amino-acid biosynthesis; L-histidine biosynthesis; L-histidine from 5-phospho-alpha-D-ribose 1-diphosphate: step 8/9. The protein is Histidine biosynthesis bifunctional protein HisB of Legionella pneumophila (strain Lens).